A 578-amino-acid chain; its full sequence is Glutathione hydrolase 2 (578 aa).

An N-terminal signal peptide occupies residues 1–26; the sequence is MNSFMSLVRTATIALLLIAFLQNANA. An N-linked (GlcNAc...) asparagine glycan is attached at asparagine 94. Arginine 103 contributes to the L-glutamate binding site. N-linked (GlcNAc...) asparagine glycosylation is found at asparagine 176 and asparagine 227. Threonine 374 (nucleophile) is an active-site residue. Residues threonine 392, asparagine 394, glutamate 413, aspartate 416, 446-447, and 467-468 contribute to the L-glutamate site; these read SS and GG. N-linked (GlcNAc...) asparagine glycosylation occurs at asparagine 511.

The protein belongs to the gamma-glutamyltransferase family. In terms of tissue distribution, expressed in roots, immature trichomes and pollen. In developing siliques, specifically expressed in the embryo, endosperm, outer integument and a small portion of the funiculus.

Its subcellular location is the secreted. It is found in the extracellular space. The protein resides in the apoplast. It catalyses the reaction an N-terminal (5-L-glutamyl)-[peptide] + an alpha-amino acid = 5-L-glutamyl amino acid + an N-terminal L-alpha-aminoacyl-[peptide]. The enzyme catalyses glutathione + H2O = L-cysteinylglycine + L-glutamate. It carries out the reaction an S-substituted glutathione + H2O = an S-substituted L-cysteinylglycine + L-glutamate. Its pathway is sulfur metabolism; glutathione metabolism. Its function is as follows. May be required for glutathione transport into developing seeds. In Arabidopsis thaliana (Mouse-ear cress), this protein is Glutathione hydrolase 2 (GGT2).